Reading from the N-terminus, the 274-residue chain is Large ribosomal subunit protein uL2 (274 aa).

A disordered region spans residues 224–274; that stretch reads VAMNPVDHPHGGGEGRTSGGRHPVTPWGIPTKGYKTRRNKRSNKLIVQKRK. Residues 257-274 show a composition bias toward basic residues; that stretch reads YKTRRNKRSNKLIVQKRK.

Belongs to the universal ribosomal protein uL2 family. As to quaternary structure, part of the 50S ribosomal subunit. Forms a bridge to the 30S subunit in the 70S ribosome.

One of the primary rRNA binding proteins. Required for association of the 30S and 50S subunits to form the 70S ribosome, for tRNA binding and peptide bond formation. It has been suggested to have peptidyltransferase activity; this is somewhat controversial. Makes several contacts with the 16S rRNA in the 70S ribosome. The polypeptide is Large ribosomal subunit protein uL2 (Francisella tularensis subsp. tularensis (strain FSC 198)).